The chain runs to 925 residues: Bifunctional imidazolonepropionase/histidine ammonia-lyase (925 aa).

Positions 1–414 (MTKNSSTVFT…IKPHVRMEPF (414 aa)) are imidazolonepropionase. The Fe(3+) site is built by His-73 and His-75. Zn(2+) is bound by residues His-73 and His-75. Residues Arg-82, Tyr-145, and His-178 each coordinate 4-imidazolone-5-propanoate. N-formimidoyl-L-glutamate is bound at residue Tyr-145. His-243 lines the Fe(3+) pocket. His-243 provides a ligand contact to Zn(2+). A 4-imidazolone-5-propanoate-binding site is contributed by Gln-246. A Fe(3+)-binding site is contributed by Asp-318. Asp-318 is a Zn(2+) binding site. The N-formimidoyl-L-glutamate site is built by Asn-320 and Gly-322. Thr-323 lines the 4-imidazolone-5-propanoate pocket. Residues 415–925 (MTIILKPGSV…SAGILPDLEA (511 aa)) are histidine ammonia-lyase. The 5-imidazolinone (Ala-Gly) cross-link spans 556–558 (ASG). Ser-557 carries the post-translational modification 2,3-didehydroalanine (Ser).

It in the N-terminal section; belongs to the metallo-dependent hydrolases superfamily. HutI family. The protein in the C-terminal section; belongs to the PAL/histidase family. Zn(2+) is required as a cofactor. Fe(3+) serves as cofactor. Post-translationally, contains an active site 4-methylidene-imidazol-5-one (MIO), which is formed autocatalytically by cyclization and dehydration of residues Ala-Ser-Gly.

It localises to the cytoplasm. The enzyme catalyses 4-imidazolone-5-propanoate + H2O = N-formimidoyl-L-glutamate. It catalyses the reaction L-histidine = trans-urocanate + NH4(+). The protein operates within amino-acid degradation; L-histidine degradation into L-glutamate; N-formimidoyl-L-glutamate from L-histidine: step 1/3. It functions in the pathway amino-acid degradation; L-histidine degradation into L-glutamate; N-formimidoyl-L-glutamate from L-histidine: step 3/3. In terms of biological role, catalyzes the hydrolytic cleavage of the carbon-nitrogen bond in imidazolone-5-propanoate to yield N-formimidoyl-L-glutamate. It is the third step in the universal histidine degradation pathway. This chain is Bifunctional imidazolonepropionase/histidine ammonia-lyase (hutIH), found in Brucella melitensis biotype 1 (strain ATCC 23456 / CCUG 17765 / NCTC 10094 / 16M).